A 43-amino-acid polypeptide reads, in one-letter code: Potassium channel toxin gamma-KTx 4.2 (43 aa).

4 disulfides stabilise this stretch: C5–C23, C11–C34, C20–C39, and C24–C41.

This sequence belongs to the ergtoxin family. Gamma-KTx 4 subfamily. In terms of tissue distribution, expressed by the venom gland.

The protein localises to the secreted. Reversibly blocks Kv11/ERG potassium channels. This is Potassium channel toxin gamma-KTx 4.2 from Centruroides noxius (Mexican scorpion).